The following is a 116-amino-acid chain: U16-barytoxin-Tl1d (116 aa).

The first 20 residues, 1 to 20 (MKTIIVFLSLLVLATKFGDA), serve as a signal peptide directing secretion. Residues 21-74 (NEGVNQEQMKEVIQNEFREDFLNEMAAMSLLQQLEAIESTLLEKEADRNSRQKR) constitute a propeptide that is removed on maturation. 3 cysteine pairs are disulfide-bonded: Cys75/Cys90, Cys82/Cys95, and Cys89/Cys110.

This sequence belongs to the neurotoxin 14 (magi-1) family. 06 (ICK-Trit) subfamily. In terms of tissue distribution, expressed by the venom gland.

It localises to the secreted. In terms of biological role, ion channel inhibitor. This is U16-barytoxin-Tl1d from Trittame loki (Brush-footed trapdoor spider).